The following is a 279-amino-acid chain: Tryptophan 2,3-dioxygenase (279 aa).

Residues 48–52, Tyr110, and Arg114 contribute to the substrate site; that span reads FIIQH. A heme-binding site is contributed by His237. Thr251 serves as a coordination point for substrate.

The protein belongs to the tryptophan 2,3-dioxygenase family. In terms of assembly, homotetramer. It depends on heme as a cofactor.

It carries out the reaction L-tryptophan + O2 = N-formyl-L-kynurenine. The protein operates within amino-acid degradation; L-tryptophan degradation via kynurenine pathway; L-kynurenine from L-tryptophan: step 1/2. Heme-dependent dioxygenase that catalyzes the oxidative cleavage of the L-tryptophan (L-Trp) pyrrole ring and converts L-tryptophan to N-formyl-L-kynurenine. Catalyzes the oxidative cleavage of the indole moiety. The polypeptide is Tryptophan 2,3-dioxygenase (Bradyrhizobium sp. (strain BTAi1 / ATCC BAA-1182)).